Consider the following 153-residue polypeptide: Transcription antitermination protein NusB (153 aa).

The protein belongs to the NusB family.

Involved in transcription antitermination. Required for transcription of ribosomal RNA (rRNA) genes. Binds specifically to the boxA antiterminator sequence of the ribosomal RNA (rrn) operons. In Fusobacterium nucleatum subsp. nucleatum (strain ATCC 25586 / DSM 15643 / BCRC 10681 / CIP 101130 / JCM 8532 / KCTC 2640 / LMG 13131 / VPI 4355), this protein is Transcription antitermination protein NusB.